A 507-amino-acid chain; its full sequence is ATP synthase subunit alpha (507 aa).

An ATP-binding site is contributed by 168–175; it reads GDRQTGKT.

Belongs to the ATPase alpha/beta chains family. F-type ATPases have 2 components, CF(1) - the catalytic core - and CF(0) - the membrane proton channel. CF(1) has five subunits: alpha(3), beta(3), gamma(1), delta(1), epsilon(1). CF(0) has three main subunits: a(1), b(2) and c(9-12). The alpha and beta chains form an alternating ring which encloses part of the gamma chain. CF(1) is attached to CF(0) by a central stalk formed by the gamma and epsilon chains, while a peripheral stalk is formed by the delta and b chains.

Its subcellular location is the cell membrane. The catalysed reaction is ATP + H2O + 4 H(+)(in) = ADP + phosphate + 5 H(+)(out). Produces ATP from ADP in the presence of a proton gradient across the membrane. The alpha chain is a regulatory subunit. This is ATP synthase subunit alpha from Mesomycoplasma hyopneumoniae (strain 7448) (Mycoplasma hyopneumoniae).